Here is a 205-residue protein sequence, read N- to C-terminus: Holliday junction branch migration complex subunit RuvA (205 aa).

The domain I stretch occupies residues 1–64 (MIGKLTGLVD…EDAIRLFGFP (64 aa)). The tract at residues 65-143 (SEVERDWFRL…ALGPVDSLTA (79 aa)) is domain II. Residues 144-153 (KLTIAEAEGT) are flexible linker. Residues 153-205 (TAPVAAQDAITALVNLGYGRPQAAAAVATSLEALGETAPLADLIRRGLKELAR) form a domain III region.

Belongs to the RuvA family. As to quaternary structure, homotetramer. Forms an RuvA(8)-RuvB(12)-Holliday junction (HJ) complex. HJ DNA is sandwiched between 2 RuvA tetramers; dsDNA enters through RuvA and exits via RuvB. An RuvB hexamer assembles on each DNA strand where it exits the tetramer. Each RuvB hexamer is contacted by two RuvA subunits (via domain III) on 2 adjacent RuvB subunits; this complex drives branch migration. In the full resolvosome a probable DNA-RuvA(4)-RuvB(12)-RuvC(2) complex forms which resolves the HJ.

The protein localises to the cytoplasm. The RuvA-RuvB-RuvC complex processes Holliday junction (HJ) DNA during genetic recombination and DNA repair, while the RuvA-RuvB complex plays an important role in the rescue of blocked DNA replication forks via replication fork reversal (RFR). RuvA specifically binds to HJ cruciform DNA, conferring on it an open structure. The RuvB hexamer acts as an ATP-dependent pump, pulling dsDNA into and through the RuvAB complex. HJ branch migration allows RuvC to scan DNA until it finds its consensus sequence, where it cleaves and resolves the cruciform DNA. In Beijerinckia indica subsp. indica (strain ATCC 9039 / DSM 1715 / NCIMB 8712), this protein is Holliday junction branch migration complex subunit RuvA.